Here is a 211-residue protein sequence, read N- to C-terminus: 2,3-bisphosphoglycerate-dependent phosphoglycerate mutase (211 aa).

Substrate contacts are provided by residues 9–16 (RHGQSEWN), 22–23 (TG), arginine 61, 88–91 (ERDY), lysine 99, 115–116 (RR), and 159–160 (GN). Histidine 10 functions as the Tele-phosphohistidine intermediate in the catalytic mechanism. Catalysis depends on glutamate 88, which acts as the Proton donor/acceptor.

Belongs to the phosphoglycerate mutase family. BPG-dependent PGAM subfamily. Homodimer.

It carries out the reaction (2R)-2-phosphoglycerate = (2R)-3-phosphoglycerate. It participates in carbohydrate degradation; glycolysis; pyruvate from D-glyceraldehyde 3-phosphate: step 3/5. Functionally, catalyzes the interconversion of 2-phosphoglycerate and 3-phosphoglycerate. This chain is 2,3-bisphosphoglycerate-dependent phosphoglycerate mutase, found in Sinorhizobium fredii (strain NBRC 101917 / NGR234).